The primary structure comprises 245 residues: DNA repair protein RecO (245 aa).

This sequence belongs to the RecO family.

In terms of biological role, involved in DNA repair and RecF pathway recombination. This is DNA repair protein RecO from Pectobacterium atrosepticum (strain SCRI 1043 / ATCC BAA-672) (Erwinia carotovora subsp. atroseptica).